The following is a 521-amino-acid chain: Glucosidase 2 subunit beta (521 aa).

The first 14 residues, 1–14, serve as a signal peptide directing secretion; it reads MLLLLLLLLPLCWA. The residue at position 24 (serine 24) is a Phosphoserine. 2 LDL-receptor class A domains span residues 37–71 and 69–113; these read FTCLDGTATIPFDQVNDDYCDCKDGSDEPGTAACP and ACPN…TVCE. Disulfide bonds link cysteine 39/cysteine 58 and cysteine 56/cysteine 70. Aspartate 49 contacts substrate. Ca(2+) contacts are provided by glutamine 50, aspartate 53, tyrosine 55, aspartate 57, aspartate 63, and glutamate 64. Aspartate 53 contacts substrate. The N-linked (GlcNAc...) asparagine glycan is linked to asparagine 72. 3 disulfides stabilise this stretch: cysteine 77–cysteine 99, cysteine 97–cysteine 112, and cysteine 100–cysteine 116. At serine 89 the chain carries Phosphoserine; by PKC. Positions 91, 94, 96, 98, 104, and 105 each coordinate Ca(2+). Lysine 166 is subject to N6-succinyllysine. Serine 168 carries the post-translational modification Phosphoserine. EF-hand domains lie at 209–244 and 245–290; these read REQERAASAFQELDDNMDGMVSLAELQTHPELDTDG and DGAL…TDIP. Positions 222, 224, 226, 228, and 233 each coordinate Ca(2+). 2 disordered regions span residues 226-267 and 280-350; these read DGMV…DTTS and YRSE…EKMP. 2 stretches are compositionally biased toward acidic residues: residues 241–253 and 308–331; these read DTDGDGALSEEEA and TEEEEEEEEEPEEEEEEEEEEEEA. Positions 332–343 are enriched in pro residues; it reads PPPLQPPQPPSP. Serine 376 and serine 383 each carry phosphoserine; by PKC. One can recognise an MRH domain in the interval 406–507; the sequence is SQCYELTTNE…ELMTPAACPE (102 aa). Cysteine 408 and cysteine 421 form a disulfide bridge. Serine 427 is subject to Phosphoserine; by PKC. Intrachain disulfides connect cysteine 464–cysteine 493 and cysteine 478–cysteine 505. N-linked (GlcNAc...) asparagine glycosylation is present at asparagine 469. Positions 518–521 match the Prevents secretion from ER motif; it reads HDEL.

Heterodimer of a catalytic alpha subunit (GANAB) and a beta subunit (PRKCSH). Binds glycosylated PTPRC. As to expression, expressed in kidney (at protein level).

Its subcellular location is the endoplasmic reticulum. It participates in glycan metabolism; N-glycan metabolism. Regulatory subunit of glucosidase II that cleaves sequentially the 2 innermost alpha-1,3-linked glucose residues from the Glc(2)Man(9)GlcNAc(2) oligosaccharide precursor of immature glycoproteins. Required for efficient PKD1/Polycystin-1 biogenesis and trafficking to the plasma membrane of the primary cilia. This Mus musculus (Mouse) protein is Glucosidase 2 subunit beta.